Consider the following 663-residue polypeptide: RING finger protein 145 (663 aa).

The next 14 helical transmembrane spans lie at 53–73, 77–97, 123–143, 146–166, 168–188, 205–222, 225–245, 275–295, 316–336, 340–360, 384–404, 410–430, 460–480, and 482–502; these read YLAL…LTLP, LVQL…HQIS, FTTA…VMKT, IWLF…VPLE, IVII…YFLG, LVQV…MSLW, LVVP…QIYS, YSLL…LTLC, TEGV…LQVV, FLLS…MLEI, SLCL…CQFF, LLII…TLFI, LLEF…TIFG, and WTVM…WLRA. A YLYF motif motif is present at residues 81 to 84; it reads YLYF. Cys537 is a catalytic residue. The RING-type; atypical zinc finger occupies 537 to 575; sequence CAICYQDMKSAVITPCSHFFHAGCLKKWLYVQETCPLCH. Residues 607-663 form a disordered region; the sequence is EGTEPPGQEHTPGTRIQEGSRDNNEYIARRPDNQEGAFDPKEYPHSAKDEAHPVESA. Residues 624-663 are compositionally biased toward basic and acidic residues; sequence EGSRDNNEYIARRPDNQEGAFDPKEYPHSAKDEAHPVESA.

In terms of assembly, interacts (via YLYF motif) with INSIG1 and INSIG2.

Its subcellular location is the endoplasmic reticulum membrane. It catalyses the reaction S-ubiquitinyl-[E2 ubiquitin-conjugating enzyme]-L-cysteine + [acceptor protein]-L-lysine = [E2 ubiquitin-conjugating enzyme]-L-cysteine + N(6)-ubiquitinyl-[acceptor protein]-L-lysine.. In terms of biological role, E3 ubiquitin ligase that catalyzes the direct transfer of ubiquitin from E2 ubiquitin-conjugating enzyme to a specific substrate. In response to bacterial infection, negatively regulates the phagocyte oxidative burst by controlling the turnover of the NADPH oxidase complex subunits. Promotes monoubiquitination of CYBA and 'Lys-48'-linked polyubiquitination and degradation of CYBB NADPH oxidase catalytic subunits, both essential for the generation of antimicrobial reactive oxygen species. Involved in the maintenance of cholesterol homeostasis. In response to high sterol concentrations ubiquitinates HMGCR, a rate-limiting enzyme in cholesterol biosynthesis, and targets it for degradation. The interaction with INSIG1 is required for this function. In addition, triggers ubiquitination of SCAP, likely inhibiting its transport to the Golgi apparatus and the subsequent processing/maturation of SREBPF2, ultimately down-regulating cholesterol biosynthesis. The chain is RING finger protein 145 from Homo sapiens (Human).